The chain runs to 236 residues: Small ribosomal subunit protein uS2c (236 aa).

This sequence belongs to the universal ribosomal protein uS2 family.

It is found in the plastid. The protein resides in the chloroplast. The protein is Small ribosomal subunit protein uS2c (rps2) of Amborella trichopoda.